A 299-amino-acid chain; its full sequence is Ethylmalonyl-CoA decarboxylase (299 aa).

Belongs to the enoyl-CoA hydratase/isomerase family.

Its subcellular location is the cytoplasm. It localises to the cytosol. It carries out the reaction (2S)-ethylmalonyl-CoA + H(+) = butanoyl-CoA + CO2. It catalyses the reaction (S)-methylmalonyl-CoA + H(+) = propanoyl-CoA + CO2. The catalysed reaction is (2R)-ethylmalonyl-CoA + H(+) = butanoyl-CoA + CO2. Decarboxylates ethylmalonyl-CoA, a potentially toxic metabolite, to form butyryl-CoA, suggesting it might be involved in metabolite proofreading. Acts preferentially on (S)-ethylmalonyl-CoA but also has some activity on the (R)-isomer. Also has methylmalonyl-CoA decarboxylase activity at lower level. This is Ethylmalonyl-CoA decarboxylase (echdc1) from Xenopus laevis (African clawed frog).